The chain runs to 287 residues: PIH1 domain-containing protein 1 (287 aa).

This sequence belongs to the PIH1 family.

Its subcellular location is the nucleus. Functionally, involved in the assembly of C/D box small nucleolar ribonucleoprotein (snoRNP) particles. Recruits the SWI/SNF complex to the core promoter of rRNA genes and enhances pre-rRNA transcription. Mediates interaction of TELO2 with the R2TP complex which is necessary for the stability of MTOR and SMG1. Positively regulates the assembly and activity of the mTORC1 complex. This Danio rerio (Zebrafish) protein is PIH1 domain-containing protein 1 (pih1d1).